The primary structure comprises 378 residues: Erythronate-4-phosphate dehydrogenase (378 aa).

Substrate contacts are provided by S45 and T66. NAD(+) contacts are provided by D146 and T175. The active site involves R208. Position 232 (D232) interacts with NAD(+). Residue E237 is part of the active site. The active-site Proton donor is H254. G257 lines the NAD(+) pocket. Position 258 (Y258) interacts with substrate.

Belongs to the D-isomer specific 2-hydroxyacid dehydrogenase family. PdxB subfamily. As to quaternary structure, homodimer.

The protein localises to the cytoplasm. The enzyme catalyses 4-phospho-D-erythronate + NAD(+) = (R)-3-hydroxy-2-oxo-4-phosphooxybutanoate + NADH + H(+). Its pathway is cofactor biosynthesis; pyridoxine 5'-phosphate biosynthesis; pyridoxine 5'-phosphate from D-erythrose 4-phosphate: step 2/5. Its function is as follows. Catalyzes the oxidation of erythronate-4-phosphate to 3-hydroxy-2-oxo-4-phosphonooxybutanoate. This chain is Erythronate-4-phosphate dehydrogenase, found in Escherichia coli O157:H7.